A 424-amino-acid polypeptide reads, in one-letter code: MEKFRVHGPFTLSGTVDISGAKNAALPILFAAVLATEPVTLTNVPDLKDVDTTFKILRKLGVVVERDESGAVQIDASKIDHYVAPYELVKTMRASIWALAPLVARFHEGQVSLPGGCTIGARPVDMHISGLEKMGSVIELDEGYVKATSNGRLHGARIYMDKVSVGATLSVMMAATLAEGTTTIENAAREPEIVDTALFLNAMGAKISGAGTDTITIEGVERLTGCQHRIVADRIETGTFLVAAAVSGGKITCRGTKADTLEAVIEKLREAGMEVTVTEDTITLDSKGQRPKAVNIRTMPHPGFPTDMQAQFTLLNVVAEGISRITETIFENRFMHIPELNRMGAKGEIEGNTAICHGVEKLKSAEVMATDLRASISLVLAGCIASGETIVDRIYHIDRGYEHIEDKLRGIGAKIERFSTKFEE.

A phosphoenolpyruvate-binding site is contributed by 22–23; it reads KN. Arg93 is a binding site for UDP-N-acetyl-alpha-D-glucosamine. The Proton donor role is filled by Cys117. Cys117 is subject to 2-(S-cysteinyl)pyruvic acid O-phosphothioketal. UDP-N-acetyl-alpha-D-glucosamine is bound by residues 162–165, Asp307, and Ile329; that span reads KVSV.

This sequence belongs to the EPSP synthase family. MurA subfamily.

The protein resides in the cytoplasm. It catalyses the reaction phosphoenolpyruvate + UDP-N-acetyl-alpha-D-glucosamine = UDP-N-acetyl-3-O-(1-carboxyvinyl)-alpha-D-glucosamine + phosphate. Its pathway is cell wall biogenesis; peptidoglycan biosynthesis. Cell wall formation. Adds enolpyruvyl to UDP-N-acetylglucosamine. The sequence is that of UDP-N-acetylglucosamine 1-carboxyvinyltransferase from Actinobacillus pleuropneumoniae serotype 3 (strain JL03).